The primary structure comprises 177 residues: R-phycoerythrin beta chain (177 aa).

Phycourobilin-binding residues include C50 and C61. The residue at position 72 (N72) is an N4-methylasparagine. The (2R,3E)-phycoerythrobilin site is built by C82 and C158.

This sequence belongs to the phycobiliprotein family. Heterodimer of an alpha and a beta chain. In terms of processing, contains two covalently linked phycoerythrobilin chromophores and one covalently linked phycourobilin chromophore.

The protein localises to the plastid. The protein resides in the chloroplast thylakoid membrane. Functionally, light-harvesting photosynthetic bile pigment-protein from the phycobiliprotein complex. The polypeptide is R-phycoerythrin beta chain (cpeB) (Pyropia yezoensis (Susabi-nori)).